Here is an 841-residue protein sequence, read N- to C-terminus: GRIP1-associated protein 1 (841 aa).

Ala-2 carries the N-acetylalanine modification. Coiled-coil stretches lie at residues 4–161 (ALSE…YGKE) and 208–641 (EQLQ…NSKS). Disordered stretches follow at residues 532 to 551 (AEES…KQCR) and 558 to 580 (LKGK…EERD). A phosphoserine mark is found at Ser-655, Ser-666, Ser-668, Ser-669, Ser-688, Ser-690, Ser-691, and Ser-692. The interval 681 to 706 (SSAVPARSLSSSPQAQPPRPAELSDE) is disordered. Over residues 682 to 694 (SAVPARSLSSSPQ) the composition is skewed to low complexity. Coiled-coil stretches lie at residues 701–735 (AELS…LEVS) and 785–814 (DENL…KDME).

In terms of assembly, interacts with GRIP1, GRIP2 and AMPA receptors. Interacts (via C-terminus) with MAPK8/JNK1 and MAP3K1/MEKK1; the interaction promotes MAP3K1-mediated phosphorylation of MAPK8. Interacts (via N-terminus) with RAB4A (in GTP-bound form). Interacts (via C-terminus) with STX12. In terms of processing, proteolytically cleaved by caspase-3. A minor C-terminal proteolytic fragment of 30 kDa is produced. Proteolytic cleavage is required for JNK signaling activation.

The protein localises to the early endosome membrane. It localises to the recycling endosome membrane. Its subcellular location is the cell projection. The protein resides in the axon. It is found in the dendrite. The protein localises to the synapse. Its function is as follows. Regulates the endosomal recycling back to the neuronal plasma membrane, possibly by connecting early and late recycling endosomal domains and promoting segregation of recycling endosomes from early endosomal membranes. Involved in the localization of recycling endosomes to dendritic spines, thereby playing a role in the maintenance of dendritic spine morphology. Required for the activity-induced AMPA receptor recycling to dendrite membranes and for long-term potentiation and synaptic plasticity. Functions as a scaffold protein to facilitate MAP3K1/MEKK1-mediated activation of the JNK1 kinase by phosphorylation, possibly by bringing MAP3K1/MEKK1 and JNK1 in close proximity. This is GRIP1-associated protein 1 from Homo sapiens (Human).